The following is a 307-amino-acid chain: Pantothenate kinase (307 aa).

90 to 97 (GSVAVGKS) is a binding site for ATP.

Belongs to the prokaryotic pantothenate kinase family.

It localises to the cytoplasm. It catalyses the reaction (R)-pantothenate + ATP = (R)-4'-phosphopantothenate + ADP + H(+). It participates in cofactor biosynthesis; coenzyme A biosynthesis; CoA from (R)-pantothenate: step 1/5. The chain is Pantothenate kinase from Enterococcus faecalis (strain ATCC 700802 / V583).